Reading from the N-terminus, the 84-residue chain is U21-theraphotoxin-Cg1a 2 (84 aa).

The signal sequence occupies residues 1–21 (MKVSVLITLAVLGVMFLFTSA). A propeptide spanning residues 22–47 (EERGSDQMDSPAWLKSMEIIFQSEER) is cleaved from the precursor. 3 disulfides stabilise this stretch: C49/C63, C56/C68, and C62/C76. V82 carries the post-translational modification Valine amide.

The protein belongs to the neurotoxin 10 (Hwtx-1) family. 05 (F4a) subfamily. In terms of tissue distribution, expressed by the venom gland.

It localises to the secreted. In terms of biological role, probable ion channel inhibitor. The chain is U21-theraphotoxin-Cg1a 2 from Chilobrachys guangxiensis (Chinese earth tiger tarantula).